The chain runs to 303 residues: Recombination-associated protein RdgC (303 aa).

This sequence belongs to the RdgC family.

The protein resides in the cytoplasm. Its subcellular location is the nucleoid. Functionally, may be involved in recombination. The protein is Recombination-associated protein RdgC of Yersinia pseudotuberculosis serotype O:1b (strain IP 31758).